The following is a 408-amino-acid chain: MTNQTVRGTKDLLFDEWYKFKYIEQTANRISSLYGFLPAQTPIFECTEVFTKTLGDSSDIITKEMYSFNDKGGKSITLRPEFTAAIVRLLIEKKLQTPIKLFSTGPAFRYERPQKGRQRQFHQINFEVFGIEDPKADIELISLAQHLLTEFGINKNVKLEINSLGDGETITKYREALILYFTKYQNDLSEDSKNRLIKNPLRILDSKDEKDKSIISDAPKISNYYTKESSDFFEQILNGLTILDIPYTVNNKLVRGLDYYCHTVFEFVTEDLGAQGAVFAGGRYDNLVSSVGGKHTPAIGFAGGIERIMELINYSPKEERPIYLIPIGREAEKHALTLANELRRNGLYVIYEYSGTLRTRMKKANQANAKAALIFGDEELSSKTLKIKNMDTGEEKIIARDNTIENIY.

The protein belongs to the class-II aminoacyl-tRNA synthetase family. As to quaternary structure, homodimer.

The protein resides in the cytoplasm. It carries out the reaction tRNA(His) + L-histidine + ATP = L-histidyl-tRNA(His) + AMP + diphosphate + H(+). The chain is Histidine--tRNA ligase from Wolbachia pipientis wMel.